The following is a 459-amino-acid chain: Cysteine--tRNA ligase (459 aa).

Cys-28 contributes to the Zn(2+) binding site. The 'HIGH' region motif lies at 30–40 (VTVYDLCHIGH). Zn(2+) is bound by residues Cys-209, His-234, and Glu-238. The 'KMSKS' region motif lies at 266-270 (KMSKS). Lys-269 lines the ATP pocket.

Belongs to the class-I aminoacyl-tRNA synthetase family. Monomer. Requires Zn(2+) as cofactor.

The protein localises to the cytoplasm. The catalysed reaction is tRNA(Cys) + L-cysteine + ATP = L-cysteinyl-tRNA(Cys) + AMP + diphosphate. This chain is Cysteine--tRNA ligase, found in Haemophilus influenzae (strain PittGG).